We begin with the raw amino-acid sequence, 222 residues long: 7-cyano-7-deazaguanine synthase (222 aa).

11–21 (FSGGQDSTTCL) provides a ligand contact to ATP. Zn(2+)-binding residues include C187, C195, C198, and C201.

The protein belongs to the QueC family. The cofactor is Zn(2+).

It carries out the reaction 7-carboxy-7-deazaguanine + NH4(+) + ATP = 7-cyano-7-deazaguanine + ADP + phosphate + H2O + H(+). It functions in the pathway purine metabolism; 7-cyano-7-deazaguanine biosynthesis. In terms of biological role, catalyzes the ATP-dependent conversion of 7-carboxy-7-deazaguanine (CDG) to 7-cyano-7-deazaguanine (preQ(0)). This chain is 7-cyano-7-deazaguanine synthase, found in Actinobacillus pleuropneumoniae serotype 5b (strain L20).